The primary structure comprises 238 residues: Cysteine-rich venom protein pseudechetoxin-like (238 aa).

The signal sequence occupies residues 1-19 (MIAFIVLLSLAAVLQQSSG). Positions 20–28 (TVDFASESS) are excised as a propeptide. In terms of domain architecture, SCP spans 38 to 164 (VDKHNALRRS…STKYLYVCQY (127 aa)). 8 cysteine pairs are disulfide-bonded: Cys-75/Cys-153, Cys-92/Cys-165, Cys-148/Cys-162, Cys-184/Cys-191, Cys-187/Cys-196, Cys-200/Cys-233, Cys-209/Cys-227, and Cys-218/Cys-231. A ShKT domain is found at 200–233 (CKHEDDFSNCKALAKNSKCQTAWIKSKCPATCFC).

Belongs to the CRISP family. Expressed by the venom gland.

It localises to the secreted. Its function is as follows. Blocks olfactory (CNGA2) and retinal (CNGA1) CNG channel currents. Does not affect neither depolarization- nor caffeine-induced contraction of smooth muscle. This Hoplocephalus stephensii (Stephens's banded snake) protein is Cysteine-rich venom protein pseudechetoxin-like.